Reading from the N-terminus, the 338-residue chain is UDP-glucose 4-epimerase (338 aa).

NAD(+) contacts are provided by residues 11 to 12, 31 to 36, 58 to 59, 80 to 84, Asn-99, Ser-124, Tyr-149, Lys-153, and Phe-178; these read YI, DNLCNS, DI, and FAGLK. The substrate site is built by Ser-124 and Tyr-149. The active-site Proton acceptor is Tyr-149. Substrate contacts are provided by residues Asn-179, 199–200, 216–218, Arg-231, 292–295, and Tyr-299; these read NL, AIF, and REGD.

It belongs to the NAD(P)-dependent epimerase/dehydratase family. As to quaternary structure, homodimer. Requires NAD(+) as cofactor.

It carries out the reaction UDP-alpha-D-glucose = UDP-alpha-D-galactose. The protein operates within carbohydrate metabolism; galactose metabolism. With respect to regulation, inhibited by UDP-phenol and NaBH3CN. Functionally, involved in the metabolism of galactose. Catalyzes the conversion of UDP-galactose (UDP-Gal) to UDP-glucose (UDP-Glc) through a mechanism involving the transient reduction of NAD. It is only active on UDP-galactose and UDP-glucose. The sequence is that of UDP-glucose 4-epimerase (galE) from Escherichia coli (strain K12).